A 124-amino-acid chain; its full sequence is V-type proton ATPase subunit F (124 aa).

Belongs to the V-ATPase F subunit family. As to quaternary structure, V-ATPase is a heteromultimeric enzyme composed of a peripheral catalytic V1 complex (components A to H) attached to an integral membrane V0 proton pore complex (components: a, c, c', c'', d, e, f and VOA1).

It localises to the vacuole membrane. Subunit of the V1 complex of vacuolar(H+)-ATPase (V-ATPase), a multisubunit enzyme composed of a peripheral complex (V1) that hydrolyzes ATP and a membrane integral complex (V0) that translocates protons. V-ATPase is responsible for acidifying and maintaining the pH of intracellular compartments. The polypeptide is V-type proton ATPase subunit F (vma7) (Neosartorya fischeri (strain ATCC 1020 / DSM 3700 / CBS 544.65 / FGSC A1164 / JCM 1740 / NRRL 181 / WB 181) (Aspergillus fischerianus)).